The primary structure comprises 155 residues: UPF0178 protein RHE_CH02229 (155 aa).

It belongs to the UPF0178 family.

The polypeptide is UPF0178 protein RHE_CH02229 (Rhizobium etli (strain ATCC 51251 / DSM 11541 / JCM 21823 / NBRC 15573 / CFN 42)).